The chain runs to 143 residues: MESSNINALQQPSSIAHHPSKQCASSLNETVKDSPPAIYEDRLEHTPVQLPRDGTPRDVCSVGQLTCRACATKPFRLNRDSQYDYLNTCPGGRHISLALEIITGRWVCIPRVFPDTPEEKWMAPYIIPDREQPSSGDEDSDTD.

Over residues 1–14 (MESSNINALQQPSS) the composition is skewed to polar residues. Residues 1-32 (MESSNINALQQPSSIAHHPSKQCASSLNETVK) are disordered.

The protein belongs to the varicellovirus ORF32 protein family. Post-translationally, phosphorylated by ORF47 protein.

This chain is Phosphoprotein 32, found in Homo sapiens (Human).